A 460-amino-acid chain; its full sequence is MGKEDKTHINVVVIGHVDSGKSTTTGHLIYKCGGIDKRTIEKFEKEAAELGKGSFKYAWVLDKLKAERERGITIDIALWKFETPKYYVTVIDAPGHRDFIKNMITGTSQADCAILIIAAGTGEFEAGISKDGQTREHALLAYTLGVKQLIVAINKMDTTKWSEARFNEIIKETSNFIKKVGYNPKTVAFVPISGFNGDNMLEASTNCPWYKGWEKEVKGGKATGKTLLEAIDSIEPPKRPTDKPLRLPLQDVYKIGGIGTVPVGRIETGILKPGMVVTFAPSNVTTEVKSVEMHHEQLAEGVPGDNVGFNVKNVSVKEIRRGNVAGDSKNDPPMGAASFDAQVIVLNHPGQVGAGYAPVLDCHTAHIACKFSELLQKIDRRTGKAVEESPKFIKSGDAAIVKMVPSKPMCVEAFTEYPPLGRFAVRDMRQTVAVGVIKKVEKAAAGSGKVTKSAAKAGKK.

Glycine 2 bears the N,N,N-trimethylglycine mark. At lysine 3 the chain carries N6,N6-dimethyllysine; alternate. An N6-methyllysine; alternate modification is found at lysine 3. In terms of domain architecture, tr-type G spans lysine 6–threonine 241. Residues glycine 15–serine 22 form a G1 region. GTP is bound at residue glycine 15–serine 22. Lysine 31 carries the N6-methyllysine modification. Positions glycine 71 to aspartate 75 are G2. The residue at position 80 (lysine 80) is an N6,N6,N6-trimethyllysine. The G3 stretch occupies residues aspartate 92 to glycine 95. GTP-binding positions include aspartate 92 to histidine 96 and asparagine 154 to aspartate 157. Residues asparagine 154 to aspartate 157 form a G4 region. Positions serine 193–phenylalanine 195 are G5. Lysine 317 bears the N6,N6-dimethyllysine; alternate mark. N6-methyllysine; alternate is present on lysine 317. An N6-methyllysine modification is found at lysine 391.

Belongs to the TRAFAC class translation factor GTPase superfamily. Classic translation factor GTPase family. EF-Tu/EF-1A subfamily.

The protein resides in the cytoplasm. In terms of biological role, this protein promotes the GTP-dependent binding of aminoacyl-tRNA to the A-site of ribosomes during protein biosynthesis. This chain is Elongation factor 1-alpha (TEF), found in Podospora anserina (Pleurage anserina).